The chain runs to 142 residues: Large ribosomal subunit protein uL11 (142 aa).

This sequence belongs to the universal ribosomal protein uL11 family. Part of the ribosomal stalk of the 50S ribosomal subunit. Interacts with L10 and the large rRNA to form the base of the stalk. L10 forms an elongated spine to which L12 dimers bind in a sequential fashion forming a multimeric L10(L12)X complex. Post-translationally, one or more lysine residues are methylated.

Functionally, forms part of the ribosomal stalk which helps the ribosome interact with GTP-bound translation factors. In Solibacter usitatus (strain Ellin6076), this protein is Large ribosomal subunit protein uL11.